We begin with the raw amino-acid sequence, 471 residues long: MVAVAILAAGRGTRMKSDLPKVLHQLGSCTLVKRVIKSCVSIQPSKIMVIVGYRGGLVQKSLLDNNNNIDNDNTPTLEFVEQTEQLGTGHAIQQLLPYLKDFSEELLVLNGDVPLLRPETIKQLIDTHQQNKNSATILTANLPNPKGYGRIFCNTNNFVTQIVEERDCTAAQTKNHRVNAGVYCFNWPALANILPKLKADNDQQEYYLTDVVPLLDPVMAVDVNDYQEIFGINNRKHLAKAHEILQVRVKDDWMEAGVTLIDPDSITIDDTVLLQQDVIVEPQTHIRGSSIIGSGSRIGPGSLIENSHIGKNTSVLYSVISDSMVADNTRIGPYAHLRGDSQVGSHCRIGNFVELKKATVGDRSNAAHLSYLGDATLGEKVNIGAGTITANYDGVKKHKTKIGDRSKTGSNSVLVAPVTLGEDVTVAAGSVVTKNVEDDSLVIGRARQAVKKGWRLKQSDESKKEENKSSP.

Residues 1–235 (MVAVAILAAG…YQEIFGINNR (235 aa)) form a pyrophosphorylase region. Residues 7–10 (LAAG), Lys21, Gln82, and 87–88 (GT) contribute to the UDP-N-acetyl-alpha-D-glucosamine site. Asp112 provides a ligand contact to Mg(2+). Gly149, Glu164, Asn179, and Asn233 together coordinate UDP-N-acetyl-alpha-D-glucosamine. Asn233 contacts Mg(2+). Residues 236–256 (KHLAKAHEILQVRVKDDWMEA) form a linker region. The interval 257 to 471 (GVTLIDPDSI…SKKEENKSSP (215 aa)) is N-acetyltransferase. Arg338 and Lys356 together coordinate UDP-N-acetyl-alpha-D-glucosamine. His368 serves as the catalytic Proton acceptor. Residues Tyr371 and Asn382 each coordinate UDP-N-acetyl-alpha-D-glucosamine. Acetyl-CoA-binding positions include Ala385, 391-392 (NY), Ser410, Ala428, and Arg445.

It in the N-terminal section; belongs to the N-acetylglucosamine-1-phosphate uridyltransferase family. This sequence in the C-terminal section; belongs to the transferase hexapeptide repeat family. As to quaternary structure, homotrimer. Mg(2+) serves as cofactor.

It localises to the cytoplasm. The enzyme catalyses alpha-D-glucosamine 1-phosphate + acetyl-CoA = N-acetyl-alpha-D-glucosamine 1-phosphate + CoA + H(+). It catalyses the reaction N-acetyl-alpha-D-glucosamine 1-phosphate + UTP + H(+) = UDP-N-acetyl-alpha-D-glucosamine + diphosphate. Its pathway is nucleotide-sugar biosynthesis; UDP-N-acetyl-alpha-D-glucosamine biosynthesis; N-acetyl-alpha-D-glucosamine 1-phosphate from alpha-D-glucosamine 6-phosphate (route II): step 2/2. It participates in nucleotide-sugar biosynthesis; UDP-N-acetyl-alpha-D-glucosamine biosynthesis; UDP-N-acetyl-alpha-D-glucosamine from N-acetyl-alpha-D-glucosamine 1-phosphate: step 1/1. It functions in the pathway bacterial outer membrane biogenesis; LPS lipid A biosynthesis. In terms of biological role, catalyzes the last two sequential reactions in the de novo biosynthetic pathway for UDP-N-acetylglucosamine (UDP-GlcNAc). The C-terminal domain catalyzes the transfer of acetyl group from acetyl coenzyme A to glucosamine-1-phosphate (GlcN-1-P) to produce N-acetylglucosamine-1-phosphate (GlcNAc-1-P), which is converted into UDP-GlcNAc by the transfer of uridine 5-monophosphate (from uridine 5-triphosphate), a reaction catalyzed by the N-terminal domain. This chain is Bifunctional protein GlmU, found in Trichodesmium erythraeum (strain IMS101).